The following is a 221-amino-acid chain: Ribosomal RNA small subunit methyltransferase Nep1 (221 aa).

Residues Gly-174, Gly-179, and 196-201 (IGNVSL) contribute to the S-adenosyl-L-methionine site.

This sequence belongs to the class IV-like SAM-binding methyltransferase superfamily. RNA methyltransferase NEP1 family. As to quaternary structure, homodimer.

It carries out the reaction a pseudouridine in rRNA + S-adenosyl-L-methionine = an N(1)-methylpseudouridine in rRNA + S-adenosyl-L-homocysteine + H(+). Methyltransferase involved in ribosomal biogenesis. Specifically catalyzes the N1-methylation of the pseudouridine corresponding to position 914 in M.jannaschii 16S rRNA. In Pyrobaculum calidifontis (strain DSM 21063 / JCM 11548 / VA1), this protein is Ribosomal RNA small subunit methyltransferase Nep1.